We begin with the raw amino-acid sequence, 369 residues long: Phenylalanine--tRNA ligase alpha subunit (369 aa).

Glutamate 270 is a Mg(2+) binding site.

The protein belongs to the class-II aminoacyl-tRNA synthetase family. Phe-tRNA synthetase alpha subunit type 1 subfamily. In terms of assembly, tetramer of two alpha and two beta subunits. Requires Mg(2+) as cofactor.

It localises to the cytoplasm. The enzyme catalyses tRNA(Phe) + L-phenylalanine + ATP = L-phenylalanyl-tRNA(Phe) + AMP + diphosphate + H(+). The sequence is that of Phenylalanine--tRNA ligase alpha subunit from Phenylobacterium zucineum (strain HLK1).